A 652-amino-acid chain; its full sequence is Na(+)/H(+) antiporter NhaA 3 (652 aa).

The tract at residues 1 to 428 is na(+)/H(+) antiporter NhaA; it reads MTGEIPRGRR…GASLTTWLVF (428 aa). 11 consecutive transmembrane segments (helical) span residues 32–52, 78–98, 114–134, 142–162, 173–193, 200–220, 227–249, 306–326, 342–362, 376–396, and 411–431; these read ETGSARVLLAAAVVALAWVNL, LRFWVNSGLMTFFFLVIGLEV, MLPLLAGIGGILAPIAIYLAF, VGWGVVMATDTALALGMLAVL, FLLTVAVVDDLIVIVVLAIAY, MALFVAAGIFALVLLIRAAGV, LLLGVAAWLAVSESGVDPVVVGL, HPWASYLIVPLFALANVGVVV, GVLFAYVVGKPAGIVIASMLV, WAAIIGVGTVSGIGFTIALLI, and VGILVATVGASLTTWLVFRLA. The Thioredoxin domain maps to 429 to 623; that stretch reads RLAARLAPAR…LSAAVMSAFA (195 aa). The tract at residues 626–652 is disordered; it reads RLRPEGGREPDHRSEAGSEQPDEEPGT. Residues 627–641 show a composition bias toward basic and acidic residues; sequence LRPEGGREPDHRSEA.

The protein in the N-terminal section; belongs to the NhaA Na(+)/H(+) (TC 2.A.33) antiporter family.

The protein resides in the cell membrane. It carries out the reaction Na(+)(in) + 2 H(+)(out) = Na(+)(out) + 2 H(+)(in). In terms of biological role, na(+)/H(+) antiporter that extrudes sodium in exchange for external protons. In Salinispora tropica (strain ATCC BAA-916 / DSM 44818 / JCM 13857 / NBRC 105044 / CNB-440), this protein is Na(+)/H(+) antiporter NhaA 3.